A 110-amino-acid chain; its full sequence is Large ribosomal subunit protein uL22 (110 aa).

This sequence belongs to the universal ribosomal protein uL22 family. Part of the 50S ribosomal subunit.

Functionally, this protein binds specifically to 23S rRNA; its binding is stimulated by other ribosomal proteins, e.g. L4, L17, and L20. It is important during the early stages of 50S assembly. It makes multiple contacts with different domains of the 23S rRNA in the assembled 50S subunit and ribosome. Its function is as follows. The globular domain of the protein is located near the polypeptide exit tunnel on the outside of the subunit, while an extended beta-hairpin is found that lines the wall of the exit tunnel in the center of the 70S ribosome. This is Large ribosomal subunit protein uL22 from Saccharophagus degradans (strain 2-40 / ATCC 43961 / DSM 17024).